Consider the following 409-residue polypeptide: NADH-quinone oxidoreductase subunit D (409 aa).

This sequence belongs to the complex I 49 kDa subunit family. NDH-1 is composed of 14 different subunits. Subunits NuoB, C, D, E, F, and G constitute the peripheral sector of the complex.

The protein resides in the cell inner membrane. The catalysed reaction is a quinone + NADH + 5 H(+)(in) = a quinol + NAD(+) + 4 H(+)(out). Functionally, NDH-1 shuttles electrons from NADH, via FMN and iron-sulfur (Fe-S) centers, to quinones in the respiratory chain. The immediate electron acceptor for the enzyme in this species is believed to be ubiquinone. Couples the redox reaction to proton translocation (for every two electrons transferred, four hydrogen ions are translocated across the cytoplasmic membrane), and thus conserves the redox energy in a proton gradient. This Helicobacter acinonychis (strain Sheeba) protein is NADH-quinone oxidoreductase subunit D.